Here is a 191-residue protein sequence, read N- to C-terminus: Fe/S biogenesis protein NfuA (191 aa).

[4Fe-4S] cluster is bound by residues Cys149 and Cys152.

This sequence belongs to the NfuA family. In terms of assembly, homodimer. [4Fe-4S] cluster is required as a cofactor.

Functionally, involved in iron-sulfur cluster biogenesis. Binds a 4Fe-4S cluster, can transfer this cluster to apoproteins, and thereby intervenes in the maturation of Fe/S proteins. Could also act as a scaffold/chaperone for damaged Fe/S proteins. The chain is Fe/S biogenesis protein NfuA from Pectobacterium carotovorum subsp. carotovorum (strain PC1).